The sequence spans 102 residues: Envelope protein US9 (102 aa).

Residues 1–75 lie on the Intravirion side of the membrane; that stretch reads MAGQNTMEGE…KIYHRKKFCY (75 aa). The short motif at 14–15 is the Di-leucine internalization motif element; sequence LL. The acidic stretch occupies residues 41 to 55; that stretch reads EKCYYSDSENETADE. Phosphoserine; by host CK2 is present on residues Ser-46 and Ser-48. The helical; Signal-anchor for type II membrane protein transmembrane segment at 76 to 96 threads the bilayer; it reads ITLIIVFVFAMTGAAFALGYI. Over 97–102 the chain is Virion surface; sequence TSQFVG.

It belongs to the alphaherpesvirinae envelope protein US9 family. Phosphorylated on serines within the acidic cluster, possibly by host CK2. Phosphorylation determines whether endocytosed viral US9 traffics to the trans-Golgi network or recycles to the cell membrane.

The protein localises to the virion membrane. It is found in the host Golgi apparatus membrane. The protein resides in the host Golgi apparatus. It localises to the host trans-Golgi network. Its subcellular location is the host cell membrane. Functionally, essential for the anterograde spread of the infection throughout the host nervous system. Together with the gE/gI heterodimer, US9 is involved in the sorting and transport of viral structural components toward axon tips. The polypeptide is Envelope protein US9 (Varicella-zoster virus (strain Dumas) (HHV-3)).